A 719-amino-acid chain; its full sequence is MADVTSMGEITAIAARIGVDLSQIDLDSIHLPPGEDCGIPSDDDDLMEEDPLEFDAGFGNILVVDNLPVVPKEKFEKLEGVVRKIYSQLGVIKEDGLWMPVDPETHKTLGYCFIEYNTPQEAELSKEKTHGYKLDRSHIFAVNMFDDIERFLKVPDEWAPPEIKPYVPGENLQQWLTDEKARDQFVIRAGNDTEVLWNDARQLKPELVYKRSFWTESFVQWSPLGTYLATVHRQGGAIWGGATTSNRLMRYAHPQVKLIDFSLAERYLVTYSSHEPSNPRDSHAVVLNISDVRTGKVMRDFQGSADEFAVGGTGGVTGVSWPVFRWSGGKQDKYFARIGKNVISVYETETFSLIDKKSIKVENVMDFSWSPADPILALFVPECGNQPARVSLVQIPSKEELRQKNLFSVSDCKMYWQSNGDYLAVKVDRYTKTKKSTYTGFELFRIKERDIPIEVLELDNTNDKIPAFGWGPEGSPICCYPSVTTPRPDIRFYSVPVWALTPGLVSKLTTLKGKQANALYWSPGGRFLILTGLKGFNGQLEFFDVDELETMASAEHFMATDVEWDPTGRYVATSVTSVHEMENGFNIWSFNGKLLYRILKDHFFQYLWRPRPPSFLSKEKEEEIAKNLKRYSKKYEAEDQDVSLQLSEQDREKRKKLKEEWEAWINEWKRLHEEEKMERQKLRDGEASDEEEEYEAKEVEVEEIINVTEEIIPFEESQQ.

The region spanning 60–147 (NILVVDNLPV…HIFAVNMFDD (88 aa)) is the RRM domain. WD repeat units follow at residues 167-207 (VPGE…KPEL), 511-553 (LKGK…TMAS), and 555-598 (EHFM…LYRI). Positions 675 to 686 (EKMERQKLRDGE) are enriched in basic and acidic residues. The segment at 675 to 698 (EKMERQKLRDGEASDEEEEYEAKE) is disordered. A compositionally biased stretch (acidic residues) spans 687-698 (ASDEEEEYEAKE).

It belongs to the eIF-3 subunit B family. As to quaternary structure, component of the eukaryotic translation initiation factor 3 (eIF-3) complex.

The protein localises to the cytoplasm. Its function is as follows. RNA-binding component of the eukaryotic translation initiation factor 3 (eIF-3) complex, which is involved in protein synthesis of a specialized repertoire of mRNAs and, together with other initiation factors, stimulates binding of mRNA and methionyl-tRNAi to the 40S ribosome. The eIF-3 complex specifically targets and initiates translation of a subset of mRNAs involved in cell proliferation. The protein is Eukaryotic translation initiation factor 3 subunit B (TIF3B1) of Nicotiana tabacum (Common tobacco).